We begin with the raw amino-acid sequence, 313 residues long: Solute carrier family 35 member E3 (313 aa).

9 helical membrane-spanning segments follow: residues 17–37 (GLLF…WIYV), 40–60 (GFPN…GLYI), 71–91 (SLPL…VVFT), 126–146 (FSVR…LNSY), 154–174 (LGMV…VWVG), 187–206 (LLYY…VPFF), 225–245 (LMVL…YWII), 252–272 (TYNM…YILF), and 275–295 (PLSV…LTYT).

This sequence belongs to the TPT transporter family. SLC35E subfamily.

Its subcellular location is the membrane. Putative transporter. The protein is Solute carrier family 35 member E3 (Slc35e3) of Mus musculus (Mouse).